A 139-amino-acid polypeptide reads, in one-letter code: GSK3B-interacting protein (139 aa).

The interval 41–45 (VNDVL) is required for PRKAR2A interaction; contributes to a protective effect against H(2)O(2)-induced apoptosis. Residues 115-139 (SPAYREAFGNALLQRLEALKREGQS) are interaction with GSK3B and acts as a GSK3B inhibitor.

It belongs to the GSKIP family. As to quaternary structure, forms a complex composed of PRKAR2A or PRKAR2B, GSK3B and GSKIP through GSKIP interaction; facilitates PKA-induced phosphorylation of GSK3B leading to GSK3B inactivation; recruits DNM1L through GSK3B for PKA-mediated phosphorylation of DNM1L; promotes beta-catenin degradation through GSK3B-induced phosphorylation of beta-catenin; stabilizes beta-catenin and enhances Wnt-induced signaling through PKA-induced phosphorylation of beta-catenin. Interacts with GSK3B; induces GSK3B-mediated phosphorylation of GSKIP and inhibits GSK3B kinase activity. In terms of processing, phosphorylated by GSK3B.

The protein localises to the cytoplasm. The protein resides in the nucleus. A-kinase anchoring protein for GSK3B and PKA that regulates or facilitates their kinase activity towards their targets. The ternary complex enhances Wnt-induced signaling by facilitating the GSK3B- and PKA-induced phosphorylation of beta-catenin leading to beta-catenin degradation and stabilization respectively. Upon cAMP activation, the ternary complex contributes to neuroprotection against oxidative stress-induced apoptosis by facilitating the PKA-induced phosphorylation of DML1 and PKA-induced inactivation of GSK3B. During neurite outgrowth promotes neuron proliferation; while increases beta-catenin-induced transcriptional activity through GSK3B kinase activity inhibition, reduces N-cadherin level to promote cell cycle progression. May play a role in cleft palate formation and is required for postnatal life through modulation of the activity of GSK3B during development. The protein is GSK3B-interacting protein of Bos taurus (Bovine).